Consider the following 270-residue polypeptide: HTH-type transcriptional activator AllS (270 aa).

Residues 4-61 (LDPETLRTFVSVAETGSFSRAAEKLYKTTATISYRIKLLEDNTGVALFSRTTRSVLLT) form the HTH lysR-type domain. Residues 21–40 (FSRAAEKLYKTTATISYRIK) constitute a DNA-binding region (H-T-H motif).

Belongs to the LysR transcriptional regulatory family.

Positive regulator essential for the expression of allD operon. Binds to the allD promoter. This Klebsiella pneumoniae protein is HTH-type transcriptional activator AllS (allS).